Reading from the N-terminus, the 450-residue chain is Signal recognition particle protein (450 aa).

Residues 106–113, 188–192, and 246–249 contribute to the GTP site; these read GLQGSGKT, DTAGR, and TKLD.

The protein belongs to the GTP-binding SRP family. SRP54 subfamily. As to quaternary structure, part of the signal recognition particle protein translocation system, which is composed of SRP and FtsY.

The protein resides in the cytoplasm. The catalysed reaction is GTP + H2O = GDP + phosphate + H(+). Involved in targeting and insertion of nascent membrane proteins into the cytoplasmic membrane. Binds to the hydrophobic signal sequence of the ribosome-nascent chain (RNC) as it emerges from the ribosomes. The SRP-RNC complex is then targeted to the cytoplasmic membrane where it interacts with the SRP receptor FtsY. The polypeptide is Signal recognition particle protein (Mycoplasma pneumoniae (strain ATCC 29342 / M129 / Subtype 1) (Mycoplasmoides pneumoniae)).